A 513-amino-acid polypeptide reads, in one-letter code: Glutamate--tRNA ligase 2 (513 aa).

The 'HIGH' region motif lies at Pro11 to Ser21. A 'KMSKS' region motif is present at residues Lys240–Arg244. ATP is bound at residue Lys243.

This sequence belongs to the class-I aminoacyl-tRNA synthetase family. Glutamate--tRNA ligase type 1 subfamily. In terms of assembly, monomer.

It is found in the cytoplasm. It carries out the reaction tRNA(Glu) + L-glutamate + ATP = L-glutamyl-tRNA(Glu) + AMP + diphosphate. Catalyzes the attachment of glutamate to tRNA(Glu) in a two-step reaction: glutamate is first activated by ATP to form Glu-AMP and then transferred to the acceptor end of tRNA(Glu). This is Glutamate--tRNA ligase 2 from Rickettsia massiliae (strain Mtu5).